Consider the following 541-residue polypeptide: Glutamyl-tRNA(Gln) amidotransferase subunit B, mitochondrial (541 aa).

It belongs to the GatB/GatE family. GatB subfamily. Subunit of the heterotrimeric GatFAB amidotransferase (AdT) complex, composed of A (HER2), B (PET112) and F (YGR102C) subunits.

It localises to the mitochondrion. The catalysed reaction is L-glutamyl-tRNA(Gln) + L-glutamine + ATP + H2O = L-glutaminyl-tRNA(Gln) + L-glutamate + ADP + phosphate + H(+). Its function is as follows. Allows the formation of correctly charged Gln-tRNA(Gln) through the transamidation of misacylated Glu-tRNA(Gln) in the mitochondria. The reaction takes place in the presence of glutamine and ATP through an activated gamma-phospho-Glu-tRNA(Gln). The sequence is that of Glutamyl-tRNA(Gln) amidotransferase subunit B, mitochondrial from Saccharomyces cerevisiae (strain ATCC 204508 / S288c) (Baker's yeast).